Here is a 308-residue protein sequence, read N- to C-terminus: Pantothenate synthetase (308 aa).

ATP is bound at residue 39-46 (MGALHDGH). Catalysis depends on H46, which acts as the Proton donor. Residue Q71 coordinates (R)-pantoate. Residue Q71 participates in beta-alanine binding. 157-160 (GEKD) contacts ATP. Position 163 (Q163) interacts with (R)-pantoate. ATP contacts are provided by residues V186 and 194 to 197 (MSSR). Residues 286 to 308 (IETPAGTAGPDGDRQYAQSPWRN) form a disordered region.

Belongs to the pantothenate synthetase family. As to quaternary structure, homodimer.

It is found in the cytoplasm. It catalyses the reaction (R)-pantoate + beta-alanine + ATP = (R)-pantothenate + AMP + diphosphate + H(+). The protein operates within cofactor biosynthesis; (R)-pantothenate biosynthesis; (R)-pantothenate from (R)-pantoate and beta-alanine: step 1/1. Catalyzes the condensation of pantoate with beta-alanine in an ATP-dependent reaction via a pantoyl-adenylate intermediate. The protein is Pantothenate synthetase of Mycobacterium avium (strain 104).